The sequence spans 849 residues: Autoinducer 1 sensor kinase/phosphatase LuxN (849 aa).

7 helical membrane-spanning segments follow: residues 9–29, 41–61, 160–180, 196–216, 220–242, 251–275, and 283–301; these read IVYA…MWLF, VIFG…IAWI, SYFF…LVAM, IAGI…MTYF, FSLT…YALL, YIAY…AIFI, and WLIA…QLLY. One can recognise a Histidine kinase domain in the interval 468-683; that stretch reads SIAHEMRNPL…EFHLYFPVVP (216 aa). Residue histidine 471 is modified to Phosphohistidine; by autocatalysis. A Response regulatory domain is found at 722-835; the sequence is TVLIVDDKEV…ALRHVLGNWL (114 aa). Aspartate 771 is subject to 4-aspartylphosphate.

Its subcellular location is the cell inner membrane. It carries out the reaction ATP + protein L-histidine = ADP + protein N-phospho-L-histidine.. Functionally, at low cell density, in the absence of AI-1 (autoinducer 1), LuxN has a kinase activity and autophosphorylates on His-471. The phosphoryl group is then transferred on Asp-771 of the response regulator domain. The phosphoryl group is transferred to LuxU, and ultimately to LuxO. At high cell density, in the presence of AI-1, the kinase activity is inactivated, and the response regulator domain has a phosphatase activity. LuxN phosphatase acts on itself. As LuxU could function to establish an equilibrium between the aspartyl-phosphate of LuxN and the aspartyl-phosphate of LuxO, LuxU transfers phosphate from LuxO to LuxN and finally phosphate is drained from the system. The protein is Autoinducer 1 sensor kinase/phosphatase LuxN (luxN) of Vibrio harveyi (Beneckea harveyi).